The primary structure comprises 120 residues: Large ribosomal subunit protein uL18 (120 aa).

The protein belongs to the universal ribosomal protein uL18 family. As to quaternary structure, part of the 50S ribosomal subunit; part of the 5S rRNA/L5/L18/L25 subcomplex. Contacts the 5S and 23S rRNAs.

In terms of biological role, this is one of the proteins that bind and probably mediate the attachment of the 5S RNA into the large ribosomal subunit, where it forms part of the central protuberance. In Hyphomonas neptunium (strain ATCC 15444), this protein is Large ribosomal subunit protein uL18.